Reading from the N-terminus, the 79-residue chain is uncharacterized protein (79 aa).

The signal sequence occupies residues 1-24; sequence MNKFLNLIGLAFVLVLCAFSCSNA. A LysM domain is found at 32-78; that stretch reads SWHVAQKGYTCYDMATSCKVTLDQFMRTNKLDNNACKLVQIGRKYCC.

Its subcellular location is the secreted. This is an uncharacterized protein from Dictyostelium discoideum (Social amoeba).